A 241-amino-acid polypeptide reads, in one-letter code: Glucosamine-6-phosphate deaminase (241 aa).

Asp67 serves as the catalytic Proton acceptor; for enolization step. Catalysis depends on Asn136, which acts as the For ring-opening step. His138 serves as the catalytic Proton acceptor; for ring-opening step. Glu143 serves as the catalytic For ring-opening step.

The protein belongs to the glucosamine/galactosamine-6-phosphate isomerase family. NagB subfamily.

It catalyses the reaction alpha-D-glucosamine 6-phosphate + H2O = beta-D-fructose 6-phosphate + NH4(+). Its pathway is amino-sugar metabolism; N-acetylneuraminate degradation; D-fructose 6-phosphate from N-acetylneuraminate: step 5/5. Catalyzes the reversible isomerization-deamination of glucosamine 6-phosphate (GlcN6P) to form fructose 6-phosphate (Fru6P) and ammonium ion. This is Glucosamine-6-phosphate deaminase from Clostridium tetani (strain Massachusetts / E88).